We begin with the raw amino-acid sequence, 318 residues long: Quinolinate synthase (318 aa).

Residues His-34 and Ser-51 each contribute to the iminosuccinate site. [4Fe-4S] cluster is bound at residue Cys-96. Iminosuccinate contacts are provided by residues 122–124 (YIN) and Ser-139. Position 182 (Cys-182) interacts with [4Fe-4S] cluster. Iminosuccinate is bound by residues 208-210 (HPE) and Thr-225. A [4Fe-4S] cluster-binding site is contributed by Cys-275.

It belongs to the quinolinate synthase family. Type 2 subfamily. [4Fe-4S] cluster is required as a cofactor.

It is found in the cytoplasm. The catalysed reaction is iminosuccinate + dihydroxyacetone phosphate = quinolinate + phosphate + 2 H2O + H(+). It participates in cofactor biosynthesis; NAD(+) biosynthesis; quinolinate from iminoaspartate: step 1/1. Catalyzes the condensation of iminoaspartate with dihydroxyacetone phosphate to form quinolinate. In Synechocystis sp. (strain ATCC 27184 / PCC 6803 / Kazusa), this protein is Quinolinate synthase.